Reading from the N-terminus, the 126-residue chain is Aspartate 1-decarboxylase (126 aa).

S25 functions as the Schiff-base intermediate with substrate; via pyruvic acid in the catalytic mechanism. At S25 the chain carries Pyruvic acid (Ser). T57 contributes to the substrate binding site. The active-site Proton donor is Y58. A substrate-binding site is contributed by 73–75 (GAA).

It belongs to the PanD family. Heterooctamer of four alpha and four beta subunits. Requires pyruvate as cofactor. Post-translationally, is synthesized initially as an inactive proenzyme, which is activated by self-cleavage at a specific serine bond to produce a beta-subunit with a hydroxyl group at its C-terminus and an alpha-subunit with a pyruvoyl group at its N-terminus.

The protein resides in the cytoplasm. The catalysed reaction is L-aspartate + H(+) = beta-alanine + CO2. It participates in cofactor biosynthesis; (R)-pantothenate biosynthesis; beta-alanine from L-aspartate: step 1/1. Functionally, catalyzes the pyruvoyl-dependent decarboxylation of aspartate to produce beta-alanine. The chain is Aspartate 1-decarboxylase from Proteus mirabilis (strain HI4320).